A 215-amino-acid polypeptide reads, in one-letter code: LexA repressor (215 aa).

The segment at residues 29–49 (VREICSAVGFKSTSTVHSYLQ) is a DNA-binding region (H-T-H motif). Catalysis depends on for autocatalytic cleavage activity residues Ser-138 and Lys-175.

The protein belongs to the peptidase S24 family. Homodimer.

It carries out the reaction Hydrolysis of Ala-|-Gly bond in repressor LexA.. In terms of biological role, represses a number of genes involved in the response to DNA damage (SOS response), including recA and lexA. In the presence of single-stranded DNA, RecA interacts with LexA causing an autocatalytic cleavage which disrupts the DNA-binding part of LexA, leading to derepression of the SOS regulon and eventually DNA repair. This Ruminiclostridium cellulolyticum (strain ATCC 35319 / DSM 5812 / JCM 6584 / H10) (Clostridium cellulolyticum) protein is LexA repressor.